The sequence spans 238 residues: Uridylate kinase (238 aa).

12–15 (KLSG) contacts ATP. Gly54 contributes to the UMP binding site. Gly55 and Arg59 together coordinate ATP. Residues Asp74 and 135–142 (TGNPYFTT) contribute to the UMP site. ATP contacts are provided by Thr162, Asn163, Tyr168, and Asp171.

This sequence belongs to the UMP kinase family. In terms of assembly, homohexamer.

It localises to the cytoplasm. It catalyses the reaction UMP + ATP = UDP + ADP. The protein operates within pyrimidine metabolism; CTP biosynthesis via de novo pathway; UDP from UMP (UMPK route): step 1/1. With respect to regulation, inhibited by UTP. Its function is as follows. Catalyzes the reversible phosphorylation of UMP to UDP. This is Uridylate kinase from Nitrobacter hamburgensis (strain DSM 10229 / NCIMB 13809 / X14).